The chain runs to 332 residues: Phospholipase A2 inhibitor beta (332 aa).

The N-terminal stretch at 1-23 (MKSSVPSLLFVSLVMSLNSYTQQ) is a signal peptide. N35 is a glycosylation site (N-linked (GlcNAc...) asparagine). LRR repeat units lie at residues 78–101 (LPNL…LFRN), 103–125 (PELH…IFTS), 127–149 (TSLT…WFET), 150–173 (LKEL…CFDK), 175–197 (EKLT…MFSG), 198–221 (LDNL…SFHG), 223–245 (PKLS…VFQP), and 247–269 (NHXV…VAIP). N232 is a glycosylation site (N-linked (GlcNAc...) asparagine). An N-linked (GlcNAc...) asparagine glycan is attached at N272. In terms of domain architecture, LRRCT spans 280–331 (NPWACNCRMDNLLTWVKEHKIDLYSKQEIVCAFPKSFKGEEATSLHRSQICP).

Belongs to the beta-type phospholipase A2 inhibitor family. As to quaternary structure, homotrimer.

It localises to the secreted. Functionally, inhibits the enzymatic activity of the basic phospholipase A2 (PLA2). This chain is Phospholipase A2 inhibitor beta, found in Elaphe climacophora (Japanese rat snake).